Reading from the N-terminus, the 192-residue chain is MGQIEWAMWANEQALASGLILITGGIVATAGQFAQWYLGAYSIAAGVLICLLEYPRGKRSKGSTMERCGQKYLTRAVKVFGPLTSNYYIRAFLHLGLSVPAGFLLATILGTACLAIASSIYLLAAIHGEHWTPIETKPKERPQVGGTIKQPPSNPPPRPPAEARKKPSEEEVAGVPGGGPQENPMPVTDEVV.

The Cytoplasmic segment spans residues 2-7 (GQIEWA). The chain crosses the membrane as a helical span at residues 8-30 (MWANEQALASGLILITGGIVATA). The Extracellular portion of the chain corresponds to 31-35 (GQFAQ). The helical transmembrane segment at 36 to 53 (WYLGAYSIAAGVLICLLE) threads the bilayer. Residues 54-69 (YPRGKRSKGSTMERCG) are Cytoplasmic-facing. Residues 70–80 (QKYLTRAVKVF) lie within the membrane without spanning it. The Cytoplasmic portion of the chain corresponds to 81–86 (GPLTSN). A helical transmembrane segment spans residues 87-104 (YYIRAFLHLGLSVPAGFL). Position 105 (L105) is a topological domain, extracellular. Residues 106–126 (ATILGTACLAIASSIYLLAAI) form a helical membrane-spanning segment. At 127–192 (HGEHWTPIET…NPMPVTDEVV (66 aa)) the chain is on the cytoplasmic side. The tract at residues 134-192 (IETKPKERPQVGGTIKQPPSNPPPRPPAEARKKPSEEEVAGVPGGGPQENPMPVTDEVV) is disordered. Phosphothreonine is present on T147. K149 participates in a covalent cross-link: Glycyl lysine isopeptide (Lys-Gly) (interchain with G-Cter in ubiquitin). At S168 the chain carries Phosphoserine.

Belongs to the p22phox family. Component of the phagocyte NADPH oxidase core complex/cytochrome b558 complex, composed of CYBB (heavy chain (beta)) and CYBA (light chain (alpha)). Component of the phagocyte NADPH oxidase complex composed of an obligatory core heterodimer formed by the membrane proteins CYBA and CYBB and the cytosolic regulatory subunits NCF1/p47-phox, NCF2/p67-phox, NCF4/p40-phox and the small GTPase RAC1 or RAC2. Interacts with NCF1 (via SH3 domain). Interacts with SH3PXD2A. Interacts with DUOX1, DUOX2 and TPO. Interacts with NOX4; this interaction mediates superoxide generation. Interacts with calprotectin (S100A8/9). Interacts with GBP7. Interacts with NOXO1. Forms a heterodimer with NOX3 and is essential for activity and cell membrane localization of NOX3. Interacts with NOX1. Post-translationally, phosphorylation at Thr-147 enhances NADPH oxidase activity by promoting NCF1/p47-phox binding. Ubiquitinated at Lys-149 likely by RNF145.

It is found in the cell membrane. Functionally, subunit of NADPH oxidase complexes that is required for the NADPH oxidase activity that generates, in various cell types, superoxide from molecular oxygen utilizing NADPH as an electron donor. Subunit of the phagocyte NADPH oxidase complex that mediates the transfer of electrons from cytosolic NADPH to O2 to produce the superoxide anion (O2(-)). In the activated complex, electrons are first transferred from NADPH to flavin adenine dinucleotide (FAD) and subsequently transferred via two heme molecules to molecular oxygen, producing superoxide through an outer-sphere reaction. Activation of the NADPH oxidase complex is initiated by the assembly of cytosolic subunits of the NADPH oxidase complex with the core NADPH oxidase complex to form a complex at the plasma membrane or phagosomal membrane. This activation process is initiated by phosphorylation dependent binding of the cytosolic NCF1/p47-phox subunit to the C-terminus of CYBA/p22-phox. Aassociates with NOX3 to form a functional NADPH oxidase constitutively generating superoxide. The polypeptide is Cytochrome b-245 light chain (Tursiops truncatus (Atlantic bottle-nosed dolphin)).